A 56-amino-acid chain; its full sequence is Small ribosomal subunit protein uS14 (56 aa).

Residues C21, C24, C39, and C42 each coordinate Zn(2+).

This sequence belongs to the universal ribosomal protein uS14 family. It depends on Zn(2+) as a cofactor.

The protein is Small ribosomal subunit protein uS14 (RPS29) of Eremothecium gossypii (strain ATCC 10895 / CBS 109.51 / FGSC 9923 / NRRL Y-1056) (Yeast).